The sequence spans 446 residues: Cobalamin biosynthesis protein CbiHC (446 aa).

Positions 1-246 (MLLLPSRGKL…MFTPRGYSNK (246 aa)) are cobalt-factor III C(17)-methyltransferase. The interval 247-446 (YNIGEKRRAE…CLIEHADRPD (200 aa)) is cobalt-precorrin-8 methylmutase.

It in the N-terminal section; belongs to the precorrin methyltransferase family. In the C-terminal section; belongs to the CobH family.

It carries out the reaction Co(II)-factor III + S-adenosyl-L-methionine + H(+) = Co(II)-factor IV + S-adenosyl-L-homocysteine. The enzyme catalyses Co-precorrin-8X = cob(II)yrinate. Its pathway is cofactor biosynthesis; adenosylcobalamin biosynthesis; cob(II)yrinate a,c-diamide from sirohydrochlorin (anaerobic route): step 3/10. It functions in the pathway cofactor biosynthesis; adenosylcobalamin biosynthesis; cob(II)yrinate a,c-diamide from sirohydrochlorin (anaerobic route): step 9/10. Bifunctional enzyme with a methyltransferase domain that catalyzes the ring contraction and methylation of C-17 in cobalt-factor III to form cobalt-factor IV, and an isomerase domain that catalyzes the conversion of cobalt-precorrin-8 to cobyrinate. This is Cobalamin biosynthesis protein CbiHC (cbiHC) from Archaeoglobus fulgidus (strain ATCC 49558 / DSM 4304 / JCM 9628 / NBRC 100126 / VC-16).